Here is a 121-residue protein sequence, read N- to C-terminus: Large ribosomal subunit protein bL20 (121 aa).

It belongs to the bacterial ribosomal protein bL20 family.

In terms of biological role, binds directly to 23S ribosomal RNA and is necessary for the in vitro assembly process of the 50S ribosomal subunit. It is not involved in the protein synthesizing functions of that subunit. The sequence is that of Large ribosomal subunit protein bL20 from Orientia tsutsugamushi (strain Ikeda) (Rickettsia tsutsugamushi).